We begin with the raw amino-acid sequence, 504 residues long: MEFSVKSGSPEKQRSACIVVGVFEPRRLSRAGEQLDEISEGYLSTLLRRGDIEGKIGQVLFLHNVPNVLSERVLLVGCGKERELTETQYKQIIAKTITTLNDTGALEAICFLSELHIKGRDTYWAVRQATEATQDCLYNFDKFKTNKENTRRPLRKLTFNVTSRKELARAELGLQHALAVASGAKACKDLANMPPNICTPLYLSEQAIALGQRFEKITTEIVDSEQMAELKMDSYLAVAKGSANPAYMSLMHYNGGNADQKPIVLVGKGLTFDSGGISLKPGEAMDEMKYDMGGAASVFGAMKALAKLNLPINVIGILAGAENMPAGNAYRPGDILTTMSGQTVEVLNTDAEGRLVLCDVLTYVERFEPDCVVDIATLTGACIMALGHHISGLMTPHKGLANELLSASNQSSDKAWQLPMDDEFQKQLESPFADMANIGGRPAGSITAACFLSRFTKSYTWAHLDVAGTAWRSGANKGSTGRPVSLLTQFLINRSENETTAVNS.

Mn(2+)-binding residues include Lys-268 and Asp-273. Lys-280 is an active-site residue. Positions 291, 350, and 352 each coordinate Mn(2+). The active site involves Arg-354.

It belongs to the peptidase M17 family. It depends on Mn(2+) as a cofactor.

The protein resides in the cytoplasm. The catalysed reaction is Release of an N-terminal amino acid, Xaa-|-Yaa-, in which Xaa is preferably Leu, but may be other amino acids including Pro although not Arg or Lys, and Yaa may be Pro. Amino acid amides and methyl esters are also readily hydrolyzed, but rates on arylamides are exceedingly low.. It catalyses the reaction Release of an N-terminal amino acid, preferentially leucine, but not glutamic or aspartic acids.. Presumably involved in the processing and regular turnover of intracellular proteins. Catalyzes the removal of unsubstituted N-terminal amino acids from various peptides. This is Probable cytosol aminopeptidase from Psychromonas ingrahamii (strain DSM 17664 / CCUG 51855 / 37).